We begin with the raw amino-acid sequence, 486 residues long: BTB/POZ domain and ankyrin repeat-containing protein BOP (486 aa).

Residues 25–115 (SDVTFSVEGR…LYSGQVSIVP (91 aa)) form the BTB domain. The C2HC NPR-type zinc finger occupies 121-135 (RPNCGERGCWHTHCS). Zn(2+) contacts are provided by Cys124, Cys129, His131, and Cys134. ANK repeat units lie at residues 257–286 (QKIR…LNLD), 287–316 (EALA…DVNY), 321–350 (AGKT…DPNV), and 354–388 (DNVT…KLRL). Disordered regions lie at residues 403-442 (EEGN…NHNI) and 464-486 (QMSD…HHDY). Composition is skewed to low complexity over residues 406–418 (NANN…TTTT) and 432–442 (SSSSSGNNHNI). The segment covering 466–475 (SDDHGGRHGD) has biased composition (basic and acidic residues).

This sequence belongs to the plant 'ANKYRIN-BTB/POZ' family. 'NOOT-BOP-COCH-like' (NBCL) subfamily. As to quaternary structure, homodimer. Expressed in xylem vessels and parenchyma cells of pedicel vascular tissue in the abscission zone (AZ). Accumulates in developing root nodules and present in roots, especially in the upper part.

It localises to the nucleus. It is found in the cytoplasm. Its subcellular location is the cell membrane. Its pathway is protein modification; protein ubiquitination. In terms of biological role, may act as a substrate-specific adapter of an E3 ubiquitin-protein ligase complex (CUL3-RBX1-BTB) which mediates the ubiquitination and subsequent proteasomal degradation of target proteins. Transcriptional co-regulator involved in promoting the fate and determination of leaf and flower meristems. Required for the abscission of senescent organs, probably by regulating the cell wall disorganization in abscission zones (AZs, e.g. pulvini at the base of leaves). Involved in the coordination of the symbiotic nodule developmental program; promotes the formation of root nodules by interacting directly with APP1 to modulate the expression of the nuclear transcription factor Y subunit (NF-YA1), a key nodulin. Necessary for the robust maintenance of nodule identity throughout the nodule developmental program. The polypeptide is BTB/POZ domain and ankyrin repeat-containing protein BOP (Lupinus luteus (European yellow lupine)).